The primary structure comprises 193 residues: Guanylate kinase (193 aa).

Residues 8–188 (GRLVVLVGPS…ACEQLVSLFV (181 aa)) enclose the Guanylate kinase-like domain. 15–22 (GPSAVGKS) serves as a coordination point for ATP.

The protein belongs to the guanylate kinase family.

The protein resides in the cytoplasm. It catalyses the reaction GMP + ATP = GDP + ADP. Functionally, essential for recycling GMP and indirectly, cGMP. This is Guanylate kinase from Nocardia farcinica (strain IFM 10152).